Here is a 323-residue protein sequence, read N- to C-terminus: MDSKYQCVKLNDGHFMPVLGFGTYAPAEVPKSKALEAVKLAIEAGFHHIDSAHVYNNEEQVGLAIRSKIADGSVKREDIFYTSKLWSNSHRPELVRPALERSLKNLQLDYVDLYLIHFPVSVKPGEEVIPKDENGKILFDTVDLCATWEAMEKCKDAGLAKSIGVSNFNHRLLEMILNKPGLKYKPVCNQVECHPYFNQRKLLDFCKSKDIVLVAYSALGSHREEPWVDPNSPVLLEDPVLCALAKKHKRTPALIALRYQLQRGVVVLAKSYNEQRIRQNVQVFEFQLTSEEMKAIDGLNRNVRYLTLDIFAGPPNYPFSDEY.

Residues 20 to 24 (GFGTY) and aspartate 50 contribute to the NADP(+) site. Position 24 (tyrosine 24) interacts with substrate. Catalysis depends on tyrosine 55, which acts as the Proton donor. Position 117 (histidine 117) interacts with substrate. NADP(+) contacts are provided by residues 166–167 (SN), glutamine 190, and 216–222 (YSALGSH). Residues histidine 222 and tryptophan 227 each contribute to the substrate site. 270-280 (KSYNEQRIRQN) lines the NADP(+) pocket.

It belongs to the aldo/keto reductase family. As to expression, expressed in fetal testes. Expressed in fetal and adult adrenal glands.

Its subcellular location is the cytoplasm. It localises to the cytosol. It catalyses the reaction a 3alpha-hydroxysteroid + NADP(+) = a 3-oxosteroid + NADPH + H(+). The catalysed reaction is a 3alpha-hydroxysteroid + NAD(+) = a 3-oxosteroid + NADH + H(+). It carries out the reaction 5alpha-androstane-3alpha,17beta-diol + NADP(+) = 17beta-hydroxy-5alpha-androstan-3-one + NADPH + H(+). The enzyme catalyses 5alpha-androstane-3alpha,17beta-diol + NAD(+) = 17beta-hydroxy-5alpha-androstan-3-one + NADH + H(+). It catalyses the reaction 5alpha-androstane-3alpha,17beta-diol + NAD(+) = androsterone + NADH + H(+). The catalysed reaction is 17beta-estradiol + NADP(+) = estrone + NADPH + H(+). It carries out the reaction 17beta-estradiol + NAD(+) = estrone + NADH + H(+). The enzyme catalyses (20S)-hydroxypregn-4-en-3-one + NADP(+) = progesterone + NADPH + H(+). It catalyses the reaction (20S)-hydroxypregn-4-en-3-one + NAD(+) = progesterone + NADH + H(+). The catalysed reaction is androsterone + NADP(+) = 5alpha-androstan-3,17-dione + NADPH + H(+). It carries out the reaction (3beta,5alpha,17beta)-3-hydroxy-androstan-17-yl sulfate + NADP(+) = 5alpha-dihydrotestosterone sulfate + NADPH + H(+). The enzyme catalyses (1R,2R)-1,2-dihydrobenzene-1,2-diol + NADP(+) = catechol + NADPH + H(+). It catalyses the reaction (S)-indan-1-ol + NAD(+) = indan-1-one + NADH + H(+). The catalysed reaction is (S)-indan-1-ol + NADP(+) = indan-1-one + NADPH + H(+). It functions in the pathway steroid metabolism. Its activity is regulated as follows. Inhibited by hexestrol with an IC(50) of 2.8 uM, 1,10-phenanthroline with an IC(50) of 2100 uM, 1,7-phenanthroline with an IC(50) of 1500 uM, flufenamic acid with an IC(50) of 0.9 uM, indomethacin with an IC(50) of 75 uM, ibuprofen with an IC(50) of 6.9 uM, lithocholic acid with an IC(50) of 0.07 uM, ursodeoxycholic acid with an IC(50) of 0.08 uM and chenodeoxycholic acid with an IC(50) of 0.13 uM. The oxidation reaction is inhibited by low micromolar concentrations of NADPH. Its function is as follows. Cytosolic aldo-keto reductase that catalyzes the NADH and NADPH-dependent reduction of ketosteroids to hydroxysteroids. Most probably acts as a reductase in vivo since the oxidase activity measured in vitro is inhibited by physiological concentrations of NADPH. Displays a broad positional specificity acting on positions 3, 17 and 20 of steroids and regulates the metabolism of hormones like estrogens and androgens. Works in concert with the 5-alpha/5-beta-steroid reductases to convert steroid hormones into the 3-alpha/5-alpha and 3-alpha/5-beta-tetrahydrosteroids. Catalyzes the inactivation of the most potent androgen 5-alpha-dihydrotestosterone (5-alpha-DHT) to 5-alpha-androstane-3-alpha,17-beta-diol (3-alpha-diol). Also specifically able to produce 17beta-hydroxy-5alpha-androstan-3-one/5alphaDHT. May also reduce conjugated steroids such as 5alpha-dihydrotestosterone sulfate. Displays affinity for bile acids. The protein is Aldo-keto reductase family 1 member C2 (AKR1C2) of Homo sapiens (Human).